The following is a 278-amino-acid chain: Serine/arginine-rich splicing factor SR34B (278 aa).

An RRM 1 domain is found at arginine 7 to glycine 82. Basic and acidic residues predominate over residues histidine 81–arginine 91. Disordered regions lie at residues histidine 81 to arginine 121 and glutamate 192 to serine 263. Positions serine 95 to glycine 107 are enriched in gly residues. 2 stretches are compositionally biased toward basic and acidic residues: residues glycine 108 to tyrosine 120 and glutamate 192 to serine 201. One can recognise an RRM 2 domain in the interval tyrosine 120–serine 195. Phosphoserine occurs at positions 201, 203, 225, 231, 233, 242, 250, 259, and 263. The segment covering serine 207–proline 243 has biased composition (basic residues).

This sequence belongs to the splicing factor SR family. SR subfamily. In terms of assembly, component of the spliceosome.

The protein resides in the nucleus speckle. The protein localises to the nucleus. Its subcellular location is the nucleoplasm. Functionally, probably involved in intron recognition and spliceosome assembly. The chain is Serine/arginine-rich splicing factor SR34B (SR34B) from Arabidopsis thaliana (Mouse-ear cress).